Consider the following 157-residue polypeptide: 2-C-methyl-D-erythritol 2,4-cyclodiphosphate synthase (157 aa).

Residues Asp8 and His10 each coordinate a divalent metal cation. Residues 8-10 and 34-35 contribute to the 4-CDP-2-C-methyl-D-erythritol 2-phosphate site; these read DVH and HS. His42 contributes to the a divalent metal cation binding site. Residues 56–58, 61–65, 100–106, 132–135, Phe139, and Arg142 each bind 4-CDP-2-C-methyl-D-erythritol 2-phosphate; these read DIG, FPDTD, AQRPKMA, and TTTE.

This sequence belongs to the IspF family. Homotrimer. A divalent metal cation serves as cofactor.

It catalyses the reaction 4-CDP-2-C-methyl-D-erythritol 2-phosphate = 2-C-methyl-D-erythritol 2,4-cyclic diphosphate + CMP. The protein operates within isoprenoid biosynthesis; isopentenyl diphosphate biosynthesis via DXP pathway; isopentenyl diphosphate from 1-deoxy-D-xylulose 5-phosphate: step 4/6. In terms of biological role, involved in the biosynthesis of isopentenyl diphosphate (IPP) and dimethylallyl diphosphate (DMAPP), two major building blocks of isoprenoid compounds. Catalyzes the conversion of 4-diphosphocytidyl-2-C-methyl-D-erythritol 2-phosphate (CDP-ME2P) to 2-C-methyl-D-erythritol 2,4-cyclodiphosphate (ME-CPP) with a corresponding release of cytidine 5-monophosphate (CMP). This Geobacter sulfurreducens (strain ATCC 51573 / DSM 12127 / PCA) protein is 2-C-methyl-D-erythritol 2,4-cyclodiphosphate synthase.